We begin with the raw amino-acid sequence, 2592 residues long: 6-hydroxymellein synthase cdmE (2592 aa).

A compositionally biased stretch (basic and acidic residues) spans 1-11 (MVLHPSDRRFP). Residues 1 to 25 (MVLHPSDRRFPETNGVGGHSKDSSA) form a disordered region. Positions 32–456 (LEPLAIVGFA…GTNAHVVLES (425 aa)) constitute a Ketosynthase family 3 (KS3) domain. Residues C205, H340, and H379 each act as for beta-ketoacyl synthase activity in the active site. Residues 589–910 (VFTGQGAQWP…RYSHTITRKK (322 aa)) form a malonyl-CoA:ACP transacylase (MAT) domain region. The N-terminal hotdog fold stretch occupies residues 978 to 1113 (HELLGSPDPD…GFIESKCESD (136 aa)). The dehydratase (DH) domain stretch occupies residues 978–1291 (HELLGSPDPD…IRGTELCLLS (314 aa)). The PKS/mFAS DH domain occupies 978-1296 (HELLGSPDPD…LCLLSAGRGD (319 aa)). The segment at 1140 to 1296 (TQIGSISAFY…LCLLSAGRGD (157 aa)) is C-terminal hotdog fold. Positions 1462 and 1484 each coordinate S-adenosyl-L-methionine. Positions 1483–1591 (LEIGTGFGSV…HSLLKPGGKL (109 aa)) are methyltransferase (CMeT) domain. The enoyl reductase (ER) domain stretch occupies residues 1887–2199 (GLLVWSDDEA…NDSNMDTAVI (313 aa)). The interval 2223–2398 (ATYVIAGGLG…IPGMSVNLGN (176 aa)) is ketoreductase (KR) domain. Residues 2509 to 2586 (VAASHVTEAI…GLSEKIARQS (78 aa)) form the Carrier domain. An O-(pantetheine 4'-phosphoryl)serine modification is found at S2546.

It carries out the reaction 5 malonyl-CoA + AH2 + 5 H(+) = 6-hydroxymellein + A + 5 CO2 + 5 CoA + H2O. The protein operates within secondary metabolite biosynthesis; terpenoid biosynthesis. Its function is as follows. Highly reducing polyketide synthase; part of the gene cluster that mediates the biosynthesis of chrodrimanin B, a meroterpenoid that acts as a potent blocker of insect GABA-gated chloride channels. The first step of the pathway is the biosynthesis of 6-hydroxymellein by the polyketide synthase cdmE. The prenyltransferase cdmH acts as a 6-hydroxymellein 5-farnesyltransferase and produces the hydrophobic metabolite verruculide C. The FAD-dependent monooxygenase cdmI further converts verruculide C into verruculide B. The terpene cyclase cdmG then produced the pentacyclic molecule 3-hydroxypentacecilide A, the backbone structure of chrodrimanin B, via folding the farnesyl moiety of the substrate into the chair-boat conformation. The short-chain dehydrogenase/reductase cdmF functions as the 3-OH dehydrogenase that oxidizes the C-3 hydroxyl group of 3-hydroxypentacecilide A and produces chrodrimanin C, the dehydrogenated product of 3-hydroxypentacecilide A. The cytochrome P450 monooxygenase cdmJ then accepts both 3-hydroxypentacecilide A and chrodrimanin C and functions as a C-7-beta-hydroxylase to produce respectively chrodrimanin H and chrodrimanin F. The dioxygenase cdmA accepts chrodrimanin H to afford chrodrimanin E, which is further transformed to chrodrimanin A by the dioxygenase cdmD. CdmA can also accept chrodrimanin C as substrate to convert it into verruculide A, which is further converted into chrodrimanin T by cdmD. The last step of the biosynthesis is proposed to be performed by the acetyltransferase cdmC which acetylates chrodrimanin A to yield chrodrimanin B. The pathway may also lead to the production of additional shunt products, including chrodrimanins T and U. The protein is 6-hydroxymellein synthase cdmE of Talaromyces verruculosus (Penicillium verruculosum).